The sequence spans 359 residues: Chorismate synthase (359 aa).

Residue arginine 47 coordinates NADP(+). FMN contacts are provided by residues 123–125 (RSS), glycine 283, 298–302 (KPTSS), and arginine 326.

This sequence belongs to the chorismate synthase family. As to quaternary structure, homotetramer. FMNH2 serves as cofactor.

The catalysed reaction is 5-O-(1-carboxyvinyl)-3-phosphoshikimate = chorismate + phosphate. The protein operates within metabolic intermediate biosynthesis; chorismate biosynthesis; chorismate from D-erythrose 4-phosphate and phosphoenolpyruvate: step 7/7. Its function is as follows. Catalyzes the anti-1,4-elimination of the C-3 phosphate and the C-6 proR hydrogen from 5-enolpyruvylshikimate-3-phosphate (EPSP) to yield chorismate, which is the branch point compound that serves as the starting substrate for the three terminal pathways of aromatic amino acid biosynthesis. This reaction introduces a second double bond into the aromatic ring system. This Chlamydia abortus (strain DSM 27085 / S26/3) (Chlamydophila abortus) protein is Chorismate synthase.